A 277-amino-acid chain; its full sequence is NADPH-dependent 7-cyano-7-deazaguanine reductase (277 aa).

Residue 83–85 (IES) participates in substrate binding. 85-86 (SK) is a binding site for NADPH. Cysteine 184 functions as the Thioimide intermediate in the catalytic mechanism. Aspartate 191 serves as the catalytic Proton donor. 223–224 (HE) is a binding site for substrate. Residue 252–253 (RG) coordinates NADPH.

Belongs to the GTP cyclohydrolase I family. QueF type 2 subfamily. In terms of assembly, homodimer.

It is found in the cytoplasm. It catalyses the reaction 7-aminomethyl-7-carbaguanine + 2 NADP(+) = 7-cyano-7-deazaguanine + 2 NADPH + 3 H(+). It functions in the pathway tRNA modification; tRNA-queuosine biosynthesis. Catalyzes the NADPH-dependent reduction of 7-cyano-7-deazaguanine (preQ0) to 7-aminomethyl-7-deazaguanine (preQ1). The protein is NADPH-dependent 7-cyano-7-deazaguanine reductase of Cupriavidus necator (strain ATCC 17699 / DSM 428 / KCTC 22496 / NCIMB 10442 / H16 / Stanier 337) (Ralstonia eutropha).